We begin with the raw amino-acid sequence, 212 residues long: Thiamine-phosphate synthase (212 aa).

Residues 39–41 (QLR) and asparagine 71 contribute to the 4-amino-2-methyl-5-(diphosphooxymethyl)pyrimidine site. Residues aspartate 72 and aspartate 91 each contribute to the Mg(2+) site. Residue serine 110 participates in 4-amino-2-methyl-5-(diphosphooxymethyl)pyrimidine binding. 136 to 138 (TGT) is a binding site for 2-[(2R,5Z)-2-carboxy-4-methylthiazol-5(2H)-ylidene]ethyl phosphate. Residue lysine 139 coordinates 4-amino-2-methyl-5-(diphosphooxymethyl)pyrimidine. 2-[(2R,5Z)-2-carboxy-4-methylthiazol-5(2H)-ylidene]ethyl phosphate contacts are provided by residues glycine 167 and 187–188 (VS).

The protein belongs to the thiamine-phosphate synthase family. The cofactor is Mg(2+).

The catalysed reaction is 2-[(2R,5Z)-2-carboxy-4-methylthiazol-5(2H)-ylidene]ethyl phosphate + 4-amino-2-methyl-5-(diphosphooxymethyl)pyrimidine + 2 H(+) = thiamine phosphate + CO2 + diphosphate. It catalyses the reaction 2-(2-carboxy-4-methylthiazol-5-yl)ethyl phosphate + 4-amino-2-methyl-5-(diphosphooxymethyl)pyrimidine + 2 H(+) = thiamine phosphate + CO2 + diphosphate. It carries out the reaction 4-methyl-5-(2-phosphooxyethyl)-thiazole + 4-amino-2-methyl-5-(diphosphooxymethyl)pyrimidine + H(+) = thiamine phosphate + diphosphate. It participates in cofactor biosynthesis; thiamine diphosphate biosynthesis; thiamine phosphate from 4-amino-2-methyl-5-diphosphomethylpyrimidine and 4-methyl-5-(2-phosphoethyl)-thiazole: step 1/1. In terms of biological role, condenses 4-methyl-5-(beta-hydroxyethyl)thiazole monophosphate (THZ-P) and 2-methyl-4-amino-5-hydroxymethyl pyrimidine pyrophosphate (HMP-PP) to form thiamine monophosphate (TMP). This Azorhizobium caulinodans (strain ATCC 43989 / DSM 5975 / JCM 20966 / LMG 6465 / NBRC 14845 / NCIMB 13405 / ORS 571) protein is Thiamine-phosphate synthase.